Here is a 1663-residue protein sequence, read N- to C-terminus: Cortactin-binding protein 2 (1663 aa).

5 disordered regions span residues 1–23, 203–222, 367–440, 454–478, and 498–616; these read MATDGASCEPDLSRAPEDAAGAA, KKKTNELEEELSAEKRRSTE, GASV…LHPG, GNANDPDQNGNTTQSPPSRDVSPTS, and RFTS…PKPS. Residues 119–276 are a coiled coil; sequence KKMQERMSAQ…EQLKRGSDSK (158 aa). Over residues 386 to 396 the composition is skewed to low complexity; the sequence is PSTGSTPDPTS. R498 is subject to Asymmetric dimethylarginine. The segment covering 583–593 has biased composition (polar residues); sequence TVASTPSSLPQ. 6 ANK repeats span residues 709–739, 743–772, 776–805, 809–838, 842–871, and 912–942; these read GRPTLLQQAAAQGNVTLLSMLLNEEGLDINY, DGHSALYSAAKNGHTDCVRLLLSAEAQVNA, NGFTPLCAAAAQGHFECVELLISYDANINH, GGQTPLYLACKNGNKECIKLLLEAGTNRSV, DGWTPVHAAVDTGNVDSLKLLMYHRIPAHG, and EGWTAAHIAASKGFKNCLEILCRHGGLEPER. The tract at residues 1449 to 1482 is disordered; the sequence is KGESGAWRKVNTSPRRKSGRFSLPTWNKPDLSTE. S1524 is subject to Phosphoserine. The interval 1581–1663 is disordered; sequence QKEVSPLSSH…KNEHLEKPNK (83 aa). Residues 1582–1599 are compositionally biased toward polar residues; it reads KEVSPLSSHQTTECSNSK. The span at 1624 to 1638 shows a compositional bias: low complexity; it reads SQNTKRSSSSSNTRQ. Residues 1639–1648 are compositionally biased toward polar residues; sequence IEINNNSKEV. Residues 1653–1663 are compositionally biased toward basic and acidic residues; it reads HKNEHLEKPNK.

In terms of assembly, interacts with CTTN/cortactin SH3 domain. Interacts with STRN, STRN4/zinedin and MOB4/phocein; this interactions mediate the association with the STRIPAK core complex and may regulate dendritic spine distribution of the STRIPAK complex in hippocampal neurons. Activation of glutamate receptors weakens the interaction with STRN and STRN4. Highest expression in brain. Also expressed in kidney, pancreas, lung, heart, liver, skeletal muscle and placenta.

The protein localises to the cytoplasm. It localises to the cell cortex. Its subcellular location is the cell projection. It is found in the dendritic spine. Regulates the dendritic spine distribution of CTTN/cortactin in hippocampal neurons, and thus controls dendritic spinogenesis and dendritic spine maintenance. Associates with the striatin-interacting phosphatase and kinase (STRIPAK) core complex to regulate dendritic spine distribution of the STRIPAK complex in hippocampal neurons. This chain is Cortactin-binding protein 2, found in Homo sapiens (Human).